A 1465-amino-acid polypeptide reads, in one-letter code: MITANKGLSLVLLIPNLFALVSGGLQYVFDVRRRIFRPHFSQFWTIWMKFFSIALVIITQIYVGYKTKNIGWNFFSVVTYCFVLFLQFAEQSTLRVPMASLLIFWLLKVVTSLLILLFSPYIAITSMARLLTLITLFCSLVCFISEVYVPPCNRVWYSDDTNEVEEKGIRPSEVRYANIFSKLSFSWISSFIKFGYTNYLKESDVWLLPPDERSGNLIIGFEDWWIYHSKNKRRSLFLWKLLFFNHWKLVALITITKLIQDVLAFVQPTLIQKTILFISSYTSPNPESPSRGFIIAILVLVANFLQTLLLQQYNQLIMLLGMRWKTELLASIYRKSLLLSSSARQNRSIGDIINYMAVDTQKISDLPIYLFIIVSGPFQIALALSNLYHLMGYSAFTGVAASVILFPCNIIVANVYKKFQSILMKNKDSRSKLMTEIINNIRSIKLYAWETPFLQKLLHIRNTKELSMLKKIGFITAIGDFAWIFTTIIVTTVAFGAFIIFHGKTQALTADIVFPAVSLFNLLQFPLAMLPTVISSLLEASVSVSRIYEFLIAQELDYNGVQRFPATEIPHEICLEIKSGTFSWSKKTLKQQVTPTLRQINFVAKNGELTCIFGKVGAGKSSLLEACMGNMYKNSGSVFQCGSLAYAAQQPWIFDATIRENILFGSEFDPELYEKTIHACCLKRDFEIFTEGDQTEVGQKGASLSGGQKSRISLARAIYSQADIYLLDDVLSSVDQHVSRDLIKNLFGPEGFLRTHCVVLTTNSLNVLKEADSIYILSNGKIVEKGNYEHLFVSTNSELKQQLSEFNDEKDTQPLPEHTTSYPSTQISLAPSIHVEGLETYSSSERKDSSNKYKSRKRNPIRQKVTEDDKGKCVAQTDELVQRGKVKWHVYWMYFKSCSIGLILLYFFFIISGIMMNVATNVWLKHWSEENGKSSSELNPSPYFYLGIYLFFGFLSCAFISSSSLTMTVLCGIRSGRYLHDSMLKTILRAPMGFFETTSSGRILNRFSNDVYKVDEVVSLTFMFFFRNSIQVLFILGVICYSAPLSLLLIVPLFFLYLYNRAYYVRTSRELKRLDNVTRSPLYAHVQESLSGLSTIRAYGMQETFVEENDLRIDTNHRVWFMFFSSSRWQAIRVECIGDLIIFCTAFYGILSAIKGSPNPGLVGFSLSYAIQITQGLSFIVQQSVDAENNTVSVERILEYINVKSEAPEIIPENRPPCEWPTDGAVSFNHYSAKYREDLSFALNNINIEISPREKIGIVGRTGAGKSTLAMALFRIIEPTEGKIEIDNEDITKFGLYDLRSRLSIIPQESQIFEGNIRENLDPNHRLTDKKIWEVLEIASLKNCISQLEDGLYSRVAEGGANFSSGQRQLICLARVLLTSTRILLLDEATASVHAETDAIVQQTIRKRFKDRTILTVAHRINTVMDSDRILVLDHGKVVEFDATKKLLENKDSMFYSLAKESGLI.

The Extracellular portion of the chain corresponds to 1–8; it reads MITANKGL. The chain crosses the membrane as a helical span at residues 9 to 29; the sequence is SLVLLIPNLFALVSGGLQYVF. At 30–42 the chain is on the cytoplasmic side; the sequence is DVRRRIFRPHFSQ. The chain crosses the membrane as a helical span at residues 43–63; the sequence is FWTIWMKFFSIALVIITQIYV. The Extracellular segment spans residues 64–69; that stretch reads GYKTKN. A helical membrane pass occupies residues 70–90; it reads IGWNFFSVVTYCFVLFLQFAE. Residues 91–97 lie on the Cytoplasmic side of the membrane; that stretch reads QSTLRVP. The helical transmembrane segment at 98–118 threads the bilayer; sequence MASLLIFWLLKVVTSLLILLF. Topologically, residues 119–129 are extracellular; sequence SPYIAITSMAR. Residues 130-150 form a helical membrane-spanning segment; that stretch reads LLTLITLFCSLVCFISEVYVP. Position 151 to 152 (151 to 152) interacts with heme; sequence PC. Residues 151–235 lie on the Cytoplasmic side of the membrane; sequence PCNRVWYSDD…IYHSKNKRRS (85 aa). Residues 236-256 traverse the membrane as a helical segment; the sequence is LFLWKLLFFNHWKLVALITIT. The ABC transmembrane type-1 1 domain occupies 250–539; that stretch reads VALITITKLI…LPTVISSLLE (290 aa). The Extracellular portion of the chain corresponds to 257–291; that stretch reads KLIQDVLAFVQPTLIQKTILFISSYTSPNPESPSR. Residues 292-312 form a helical membrane-spanning segment; the sequence is GFIIAILVLVANFLQTLLLQQ. Topologically, residues 313 to 362 are cytoplasmic; it reads YNQLIMLLGMRWKTELLASIYRKSLLLSSSARQNRSIGDIINYMAVDTQK. Residues 363–383 traverse the membrane as a helical segment; that stretch reads ISDLPIYLFIIVSGPFQIALA. Residues 384–394 are Extracellular-facing; the sequence is LSNLYHLMGYS. A helical transmembrane segment spans residues 395 to 415; sequence AFTGVAASVILFPCNIIVANV. At 416–480 the chain is on the cytoplasmic side; sequence YKKFQSILMK…KIGFITAIGD (65 aa). Residues 481–501 traverse the membrane as a helical segment; that stretch reads FAWIFTTIIVTTVAFGAFIIF. The Extracellular segment spans residues 502–511; the sequence is HGKTQALTAD. The chain crosses the membrane as a helical span at residues 512-532; it reads IVFPAVSLFNLLQFPLAMLPT. The Cytoplasmic portion of the chain corresponds to 533–899; that stretch reads VISSLLEASV…VYWMYFKSCS (367 aa). Residues 575–804 form the ABC transporter 1 domain; sequence LEIKSGTFSW…TNSELKQQLS (230 aa). 614–621 contacts ATP; that stretch reads GKVGAGKS. Disordered stretches follow at residues 805–824 and 840–869; these read EFNDEKDTQPLPEHTTSYPS and TYSSSERKDSSNKYKSRKRNPIRQKVTEDD. A helical transmembrane segment spans residues 900–920; sequence IGLILLYFFFIISGIMMNVAT. Positions 903–1189 constitute an ABC transmembrane type-1 2 domain; that stretch reads ILLYFFFIIS…IVQQSVDAEN (287 aa). Over 921–939 the chain is Extracellular; that stretch reads NVWLKHWSEENGKSSSELN. The chain crosses the membrane as a helical span at residues 940-960; sequence PSPYFYLGIYLFFGFLSCAFI. Over 961-1033 the chain is Cytoplasmic; that stretch reads SSSSLTMTVL…FFFRNSIQVL (73 aa). A helical transmembrane segment spans residues 1034–1054; sequence FILGVICYSAPLSLLLIVPLF. At 1055–1465 the chain is on the extracellular side; it reads FLYLYNRAYY…YSLAKESGLI (411 aa). The ABC transporter 2 domain maps to 1226-1460; that stretch reads VSFNHYSAKY…KDSMFYSLAK (235 aa). ATP is bound at residue 1260-1267; sequence GRTGAGKS.

It belongs to the ABC transporter superfamily.

The protein localises to the vacuole membrane. Its function is as follows. Iron-regulated vacuolar transporter that mobilizes stored heme from the vacuole to the cytosol in response to iron deficiency. This chain is Vacuolar heme ABC transmembrane exporter abc3, found in Schizosaccharomyces pombe (strain 972 / ATCC 24843) (Fission yeast).